The sequence spans 233 residues: 5'-methylthioadenosine/S-adenosylhomocysteine nucleosidase (233 aa).

Glutamate 12 acts as the Proton acceptor in catalysis. Substrate contacts are provided by residues glycine 78, isoleucine 156, and 177 to 178 (ME). The active-site Proton donor is the aspartate 201.

The protein belongs to the PNP/UDP phosphorylase family. MtnN subfamily.

The catalysed reaction is S-adenosyl-L-homocysteine + H2O = S-(5-deoxy-D-ribos-5-yl)-L-homocysteine + adenine. The enzyme catalyses S-methyl-5'-thioadenosine + H2O = 5-(methylsulfanyl)-D-ribose + adenine. It carries out the reaction 5'-deoxyadenosine + H2O = 5-deoxy-D-ribose + adenine. Its pathway is amino-acid biosynthesis; L-methionine biosynthesis via salvage pathway; S-methyl-5-thio-alpha-D-ribose 1-phosphate from S-methyl-5'-thioadenosine (hydrolase route): step 1/2. Its function is as follows. Catalyzes the irreversible cleavage of the glycosidic bond in both 5'-methylthioadenosine (MTA) and S-adenosylhomocysteine (SAH/AdoHcy) to adenine and the corresponding thioribose, 5'-methylthioribose and S-ribosylhomocysteine, respectively. Also cleaves 5'-deoxyadenosine, a toxic by-product of radical S-adenosylmethionine (SAM) enzymes, into 5-deoxyribose and adenine. In Listeria monocytogenes serotype 4a (strain HCC23), this protein is 5'-methylthioadenosine/S-adenosylhomocysteine nucleosidase.